The sequence spans 449 residues: GPI mannosyltransferase 2 (449 aa).

Residues 1-7 (MTEKVTK) lie on the Cytoplasmic side of the membrane. The helical transmembrane segment at 8-28 (LALASRLIVLLVQLVANGALP) threads the bilayer. The Lumenal portion of the chain corresponds to 29-82 (EHKPDVFRMPVSSDQNASWIDKVIKRCLGGLRHWDGEYFLHIAENLYSYENTLA). N-linked (GlcNAc...) asparagine glycosylation occurs at Asn44. Residues 83-103 (FYPLYPVVVRHVGQAVEAIGI) traverse the membrane as a helical segment. The Cytoplasmic portion of the chain corresponds to 104-109 (SLSQES). A helical transmembrane segment spans residues 110–130 (ILLVVAVALNFWLFCESANLL). At 131–148 (FQLTQVLFNDLNKSWNAA) the chain is on the lumenal side. N-linked (GlcNAc...) asparagine glycosylation is present at Asn142. Residues 149–169 (LIYCFNPATIFFTAAYSETFF) form a helical membrane-spanning segment. Residues 170 to 196 (AYSSLHLMLECSKPTGSFRYLRLGTAL) are Cytoplasmic-facing. A helical membrane pass occupies residues 197–217 (AACLLCRSNGLITLGYPLYFF). The Lumenal portion of the chain corresponds to 218-235 (GRQLLLKNKEPNTCMQLT). A helical membrane pass occupies residues 236–256 (QMTLTILGAIGILHTYYFYIY). The Cytoplasmic portion of the chain corresponds to 257–368 (RLYCLPNTRP…GFKELIRDHT (112 aa)). Residues 369–389 (TFPFVLHAAILTLVCTVYVHI) traverse the membrane as a helical segment. Topologically, residues 390–423 (QVSTRLLASATPVFYWFAADHMPKTLAQLKLRSK) are lumenal. The helical transmembrane segment at 424-444 (AGALFVWCTTYSLVGTVLFSN) threads the bilayer. At 445–449 (NYPWT) the chain is on the cytoplasmic side.

This sequence belongs to the PIGV family.

The protein resides in the endoplasmic reticulum membrane. The protein operates within glycolipid biosynthesis; glycosylphosphatidylinositol-anchor biosynthesis. Mannosyltransferase involved in glycosylphosphatidylinositol-anchor biosynthesis. Transfers the second mannose to the glycosylphosphatidylinositol during GPI precursor assembly. Required for the GPI-mediated endoplasmic reticulum exit and proper targeting to the cell surface of chp. Required for GPI-mediated membrane attachment of chp, qsm and Cont. Essential for microvillar stability in the rhabdomere. This is GPI mannosyltransferase 2 from Drosophila melanogaster (Fruit fly).